The sequence spans 588 residues: Probable cytochrome c oxidase subunit 1-beta (588 aa).

Residues 1–26 (MTATPAQRRPALPATRPYPARHGPKG) form a disordered region. A helical membrane pass occupies residues 43-63 (VLYLVSATGFFLIGGLLALLM). H87 is a Fe(II)-heme a binding site. Transmembrane regions (helical) follow at residues 90–110 (IMLL…VLPL), 128–148 (WLYL…GGAA), 171–191 (LWIL…VNMI), 214–234 (ILIT…ALMA), 259–279 (LFWF…FGII), and 291–311 (IFGY…SMAV). Cu cation contacts are provided by H265 and Y269. The 1'-histidyl-3'-tyrosine (His-Tyr) cross-link spans 265-269 (HPEVY). 2 residues coordinate Cu cation: H314 and H315. The next 2 helical transmembrane spans lie at 320–340 (GAVL…PTGV) and 360–380 (MLFA…GVIL). Residue H398 coordinates heme a3. Helical transmembrane passes span 399–419 (FHYV…YFWF), 434–454 (LHFW…HWLG), and 477–497 (VSTI…WNGF). H400 serves as a coordination point for Fe(II)-heme a. The tract at residues 557–588 (AEAHAGRRAGHGAGAELSVPSTVATKDDDHTS) is disordered.

The protein belongs to the heme-copper respiratory oxidase family. In terms of assembly, associates with subunits II, III and IV to form cytochrome c oxidase. It depends on Cu(2+) as a cofactor. Heme is required as a cofactor.

The protein localises to the cell membrane. The enzyme catalyses 4 Fe(II)-[cytochrome c] + O2 + 8 H(+)(in) = 4 Fe(III)-[cytochrome c] + 2 H2O + 4 H(+)(out). It functions in the pathway energy metabolism; oxidative phosphorylation. Cytochrome c oxidase is the component of the respiratory chain that catalyzes the reduction of oxygen to water. Subunits 1-3 form the functional core of the enzyme complex. CO I is the catalytic subunit of the enzyme. Electrons originating in cytochrome c are transferred via the copper A center of subunit 2 and heme A of subunit 1 to the bimetallic center formed by heme A3 and copper B. This chain is Probable cytochrome c oxidase subunit 1-beta (ctaD2), found in Nocardia farcinica (strain IFM 10152).